Consider the following 143-residue polypeptide: Transcriptional regulator MraZ (143 aa).

2 SpoVT-AbrB domains span residues 5–47 and 76–119; these read EYSH…PMPV and AMEA…SDEN.

This sequence belongs to the MraZ family. Forms oligomers.

The protein resides in the cytoplasm. It localises to the nucleoid. This chain is Transcriptional regulator MraZ, found in Leuconostoc citreum (strain KM20).